Reading from the N-terminus, the 315-residue chain is uncharacterized protein (315 aa).

This is an uncharacterized protein from Caenorhabditis elegans.